A 119-amino-acid chain; its full sequence is Ribonuclease P protein component (119 aa).

The protein belongs to the RnpA family. Consists of a catalytic RNA component (M1 or rnpB) and a protein subunit.

The enzyme catalyses Endonucleolytic cleavage of RNA, removing 5'-extranucleotides from tRNA precursor.. Functionally, RNaseP catalyzes the removal of the 5'-leader sequence from pre-tRNA to produce the mature 5'-terminus. It can also cleave other RNA substrates such as 4.5S RNA. The protein component plays an auxiliary but essential role in vivo by binding to the 5'-leader sequence and broadening the substrate specificity of the ribozyme. The chain is Ribonuclease P protein component from Escherichia coli O6:H1 (strain CFT073 / ATCC 700928 / UPEC).